Reading from the N-terminus, the 116-residue chain is Aspartate 1-decarboxylase (116 aa).

The active-site Schiff-base intermediate with substrate; via pyruvic acid is Ser-25. Pyruvic acid (Ser) is present on Ser-25. A substrate-binding site is contributed by Thr-57. Tyr-58 acts as the Proton donor in catalysis. Residue 73–75 (GAA) participates in substrate binding.

The protein belongs to the PanD family. In terms of assembly, heterooctamer of four alpha and four beta subunits. Pyruvate is required as a cofactor. Is synthesized initially as an inactive proenzyme, which is activated by self-cleavage at a specific serine bond to produce a beta-subunit with a hydroxyl group at its C-terminus and an alpha-subunit with a pyruvoyl group at its N-terminus.

It is found in the cytoplasm. It catalyses the reaction L-aspartate + H(+) = beta-alanine + CO2. It participates in cofactor biosynthesis; (R)-pantothenate biosynthesis; beta-alanine from L-aspartate: step 1/1. Catalyzes the pyruvoyl-dependent decarboxylation of aspartate to produce beta-alanine. The chain is Aspartate 1-decarboxylase from Leptospira interrogans serogroup Icterohaemorrhagiae serovar copenhageni (strain Fiocruz L1-130).